The sequence spans 156 residues: Arginine repressor (156 aa).

The protein belongs to the ArgR family.

It is found in the cytoplasm. Its pathway is amino-acid biosynthesis; L-arginine biosynthesis [regulation]. Functionally, regulates arginine biosynthesis genes. The protein is Arginine repressor of Salmonella paratyphi C (strain RKS4594).